The following is a 104-amino-acid chain: Putative membrane protein insertion efficiency factor (104 aa).

The tract at residues 83-104 (SSPTPLAESPDDRTVPHTQETS) is disordered.

Belongs to the UPF0161 family.

Its subcellular location is the cell inner membrane. Its function is as follows. Could be involved in insertion of integral membrane proteins into the membrane. This chain is Putative membrane protein insertion efficiency factor, found in Chlamydia trachomatis serovar D (strain ATCC VR-885 / DSM 19411 / UW-3/Cx).